Here is a 343-residue protein sequence, read N- to C-terminus: Transcription factor MYB83 (343 aa).

Residues 1–16 (MMMRKPDITTIRDKGK) show a composition bias toward basic and acidic residues. The disordered stretch occupies residues 1 to 33 (MMMRKPDITTIRDKGKPNHACGGNNNKPKLRKG). HTH myb-type domains are found at residues 27–79 (KPKL…INYL) and 80–134 (RPDL…KKRL). 2 DNA-binding regions (H-T-H motif) span residues 55–79 (WSDI…INYL) and 107–130 (WSQI…NSTL). Positions 134–172 (LKNNSNNNTSSGSSPNNSNSNSLDPRDQHVDMGGNSTSL) are disordered. The span at 136–155 (NNSNNNTSSGSSPNNSNSNS) shows a compositional bias: low complexity.

In terms of tissue distribution, expressed specifically in fiber and vessel cells that are undergoing secondary wall thickening in floral stems. Expressed in vessels but not in xylary fibers in the developing secondary xylem of roots.

It is found in the nucleus. Its function is as follows. Transcription factor that acts as a molecular switch in the NAC012/SND1-mediated transcriptional network regulating secondary wall biosynthesis. Is directly activated by NAC012/SND1 and its close homologs, including NAC043/NST1, NAC066/NST2, NAC101/VND6 and NAC030/VND7. Is required for functional expression of a number of secondary wall-associated transcription factors and secondary wall biosynthetic genes involved in cellulose, xylan and lignin synthesis. Functions redundantly with MYB46 in the transcriptional regulatory cascade leading to secondary wall formation in fibers and vessels. Transcription activator that binds to the DNA consensus sequence 5'-ACC[AT]A[AC][TC]-3', designated as the secondary wall MYB-responsive element (SMRE). Regulates directly numerous transcription factors and a number of genes involved in secondary wall biosynthesis that contain SMRE elements in their promoters. The sequence is that of Transcription factor MYB83 from Arabidopsis thaliana (Mouse-ear cress).